The sequence spans 507 residues: Germ cell nuclear acidic protein (507 aa).

Residues 1–51 (MDSGSSSSSSSSGSSSGSCSTSGSGSTSGSSTTSSSSSSSSSSSSSSSSSS) show a composition bias toward low complexity. The segment at 1-507 (MDSGSSSSSS…GRGRGAKAGK (507 aa)) is disordered. Short sequence motifs (SUMO interaction motif 1 (SIM)) lie at residues 12-15 (SGSS), 66-69 (CVVI), 86-89 (VCEI), and 108-111 (LIVI). Composition is skewed to basic and acidic residues over residues 122–141 (KNTKQKSDEPQMSVLEKEGV), 179–354 (SEAK…KGEM), and 431–449 (PQDRADPQDLADPQDRGDS). Residues 480–507 (GRGRGRGRGRGRGRGRGRGRGRGAKAGK) show a composition bias toward basic residues.

Belongs to the serine-aspartate repeat-containing protein (SDr) family. Interacts (via SIM domains) with SUMO2; this interaction allows the GCNA recruitment to DPCs sites. Interacts with TOP2A; this interaction allows the resolution of topoisomerase II (TOP2A) DNA-protein cross-links. In terms of tissue distribution, germ-cells specific.

The protein localises to the chromosome. The protein resides in the nucleus. It localises to the PML body. Its function is as follows. May play a role in DNA-protein cross-links (DPCs) clearance through a SUMO-dependent recruitment to sites of DPCs, ensuring the genomic stability by protecting germ cells and early embryos from various sources of damage. Can resolve the topoisomerase II (TOP2A) DPCs. This chain is Germ cell nuclear acidic protein, found in Mus musculus (Mouse).